A 213-amino-acid polypeptide reads, in one-letter code: Dephospho-CoA kinase (213 aa).

The DPCK domain maps to 3-202 (RIGLTGGIGS…QSYLALADKH (200 aa)). 11 to 16 (GSGKTR) is a binding site for ATP.

The protein belongs to the CoaE family.

It localises to the cytoplasm. The catalysed reaction is 3'-dephospho-CoA + ATP = ADP + CoA + H(+). It participates in cofactor biosynthesis; coenzyme A biosynthesis; CoA from (R)-pantothenate: step 5/5. Its function is as follows. Catalyzes the phosphorylation of the 3'-hydroxyl group of dephosphocoenzyme A to form coenzyme A. In Bordetella avium (strain 197N), this protein is Dephospho-CoA kinase.